Here is a 279-residue protein sequence, read N- to C-terminus: Large ribosomal subunit protein uL2 (279 aa).

Disordered regions lie at residues 32 to 53 and 225 to 279; these read SLLRPLPKHGGRNNAGRITTRH and AMNP…KKRK. Residues 253-268 are compositionally biased toward basic and acidic residues; sequence KEGRTRHINKPSDKLI. Residues 269-279 are compositionally biased toward basic residues; it reads VRRRNAGKKRK.

It belongs to the universal ribosomal protein uL2 family. In terms of assembly, part of the 50S ribosomal subunit. Forms a bridge to the 30S subunit in the 70S ribosome.

Its function is as follows. One of the primary rRNA binding proteins. Required for association of the 30S and 50S subunits to form the 70S ribosome, for tRNA binding and peptide bond formation. It has been suggested to have peptidyltransferase activity; this is somewhat controversial. Makes several contacts with the 16S rRNA in the 70S ribosome. The chain is Large ribosomal subunit protein uL2 from Clavibacter michiganensis subsp. michiganensis (strain NCPPB 382).